A 254-amino-acid chain; its full sequence is Alcohol dehydrogenase 1 (254 aa).

10–33 (FVAGLGGIGFDTSREIVKKGPKNL) contributes to the NAD(+) binding site. Ser-138 provides a ligand contact to substrate. Tyr-151 (proton acceptor) is an active-site residue.

Belongs to the short-chain dehydrogenases/reductases (SDR) family. As to quaternary structure, homodimer.

It carries out the reaction a primary alcohol + NAD(+) = an aldehyde + NADH + H(+). It catalyses the reaction a secondary alcohol + NAD(+) = a ketone + NADH + H(+). The protein is Alcohol dehydrogenase 1 (Adh1) of Drosophila mojavensis (Fruit fly).